Reading from the N-terminus, the 257-residue chain is Ribonuclease HII (257 aa).

Residues 72-257 (TYIAGIDEVG…FAPIKDMIQK (186 aa)) enclose the RNase H type-2 domain. The a divalent metal cation site is built by aspartate 78, glutamate 79, and aspartate 170.

It belongs to the RNase HII family. Requires Mn(2+) as cofactor. The cofactor is Mg(2+).

The protein resides in the cytoplasm. It carries out the reaction Endonucleolytic cleavage to 5'-phosphomonoester.. Its function is as follows. Endonuclease that specifically degrades the RNA of RNA-DNA hybrids. The protein is Ribonuclease HII of Bacillus cereus (strain ATCC 10987 / NRS 248).